The primary structure comprises 36 residues: Serum amyloid P-component (36 aa).

The 31-residue stretch at 6-36 (SGKVFVIPMATSTSHVKLHARVSEPISAMTM) folds into the Pentraxin (PTX) domain.

This sequence belongs to the pentraxin family. In terms of assembly, homopentamer. Discoid arrangement of 5 covalently bound subunits. Ca(2+) serves as cofactor.

Its subcellular location is the secreted. The chain is Serum amyloid P-component from Salmo salar (Atlantic salmon).